Reading from the N-terminus, the 264-residue chain is uncharacterized protein (264 aa).

A helical transmembrane segment spans residues 182–198 (TVTGVSNALGFIIAALL).

To E.coli YjiC.

It localises to the membrane. This is an uncharacterized protein from Escherichia coli (strain K12).